The sequence spans 330 residues: Pyridoxal 5'-phosphate synthase subunit PdxS (330 aa).

Asp23 contacts D-ribose 5-phosphate. The active-site Schiff-base intermediate with D-ribose 5-phosphate is the Lys80. Gly152 serves as a coordination point for D-ribose 5-phosphate. Arg164 lines the D-glyceraldehyde 3-phosphate pocket. Residues Gly250 and 271–272 contribute to the D-ribose 5-phosphate site; that span reads GS.

Belongs to the PdxS/SNZ family. As to quaternary structure, in the presence of PdxT, forms a dodecamer of heterodimers.

It catalyses the reaction aldehydo-D-ribose 5-phosphate + D-glyceraldehyde 3-phosphate + L-glutamine = pyridoxal 5'-phosphate + L-glutamate + phosphate + 3 H2O + H(+). It participates in cofactor biosynthesis; pyridoxal 5'-phosphate biosynthesis. In terms of biological role, catalyzes the formation of pyridoxal 5'-phosphate from ribose 5-phosphate (RBP), glyceraldehyde 3-phosphate (G3P) and ammonia. The ammonia is provided by the PdxT subunit. Can also use ribulose 5-phosphate and dihydroxyacetone phosphate as substrates, resulting from enzyme-catalyzed isomerization of RBP and G3P, respectively. The polypeptide is Pyridoxal 5'-phosphate synthase subunit PdxS (Methanocaldococcus jannaschii (strain ATCC 43067 / DSM 2661 / JAL-1 / JCM 10045 / NBRC 100440) (Methanococcus jannaschii)).